The primary structure comprises 985 residues: Vacuolar membrane protease (985 aa).

Residues 1-20 are Cytoplasmic-facing; that stretch reads MASSRAQRFNPIAFTPWPVT. Residues 21–41 traverse the membrane as a helical segment; sequence CITTIVYLALLIPILVINLVV. At 42–388 the chain is on the vacuolar side; sequence PSAPETNPKG…MFGTAFAVFR (347 aa). Residues Asn53, Asn116, and Asn119 are each glycosylated (N-linked (GlcNAc...) asparagine). The Zn(2+) site is built by His175 and Asp187. Glu221 (proton acceptor) is an active-site residue. Glu222 contacts Zn(2+). N-linked (GlcNAc...) asparagine glycosylation is present at Asn238. Zn(2+)-binding residues include Glu247 and His320. Residues 389-409 traverse the membrane as a helical segment; sequence LHTLFAISVALLVIAPLVIFV. The Cytoplasmic segment spans residues 410-440; sequence TNRMYLFSMSKSLEGTGDQVSLRGLRGFSRT. The helical transmembrane segment at 441-461 threads the bilayer; it reads PIILVTATTIPICLAYLLEKV. The Vacuolar segment spans residues 462 to 470; the sequence is NPYIVHSSQ. Residues 471-491 traverse the membrane as a helical segment; sequence FSVWSMMFSAWIFLAWFLACA. Topologically, residues 492–502 are cytoplasmic; it reads ADFFRPSALHR. The chain crosses the membrane as a helical span at residues 503 to 523; it reads AYSYTWIFIATWIMLVINTVY. The Vacuolar portion of the chain corresponds to 524–527; it reads ANQK. A helical membrane pass occupies residues 528-548; it reads GIAAGYFLLFYFAGAFLATWI. Residues 549–666 lie on the Cytoplasmic side of the membrane; it reads SYLELFALPR…TLPRWTWVLQ (118 aa). The segment at 563 to 612 is disordered; the sequence is ARQTTGRRPSSLSSRLLTSSADELRSNASPSTAEFPGAAGEDTDPTESTS. The segment covering 566–582 has biased composition (low complexity); the sequence is TTGRRPSSLSSRLLTSS. A helical membrane pass occupies residues 667 to 687; that stretch reads LLLLAPIVLILVGQLALFLTA. Residues 688-700 are Vacuolar-facing; sequence SMCQVGSDGVSTF. A helical transmembrane segment spans residues 701 to 721; it reads VVYLACAVFTTLLCIPLFPLI. Topologically, residues 722–727 are cytoplasmic; the sequence is HRFTYH. The helical transmembrane segment at 728 to 748 threads the bilayer; the sequence is IPTFLFLVFIGTLIYNLVAFP. At 749–985 the chain is on the vacuolar side; sequence FSPANRLKTF…VEASHSFTIQ (237 aa). N-linked (GlcNAc...) asparagine glycosylation is found at Asn767, Asn795, and Asn839.

Belongs to the peptidase M28 family. It depends on Zn(2+) as a cofactor.

The protein localises to the vacuole membrane. In terms of biological role, may be involved in vacuolar sorting and osmoregulation. This is Vacuolar membrane protease from Ajellomyces capsulatus (strain G186AR / H82 / ATCC MYA-2454 / RMSCC 2432) (Darling's disease fungus).